A 487-amino-acid polypeptide reads, in one-letter code: 2-aminomuconic semialdehyde dehydrogenase (487 aa).

209-215 (GTGPRVG) lines the NAD(+) pocket. Catalysis depends on glutamate 253, which acts as the Proton acceptor. Cysteine 287 functions as the Nucleophile in the catalytic mechanism. The residue at position 362 (serine 362) is a Phosphoserine.

The protein belongs to the aldehyde dehydrogenase family. As to expression, highly expressed in adult kidney and liver. Detected at lower levels in fetal liver and kidney.

It localises to the cytoplasm. The enzyme catalyses 2-aminomuconate 6-semialdehyde + NAD(+) + H2O = (2Z,4E)-2-aminomuconate + NADH + 2 H(+). It participates in amino-acid degradation; L-kynurenine degradation. Its function is as follows. Catalyzes the NAD-dependent oxidation of 2-aminomuconic semialdehyde of the kynurenine metabolic pathway in L-tryptophan degradation. This chain is 2-aminomuconic semialdehyde dehydrogenase, found in Homo sapiens (Human).